The primary structure comprises 84 residues: Hepcidin (84 aa).

Residues 1–24 form the signal peptide; that stretch reads MALSSQIWAACLLLLLLLASLTSG. Residues 25-54 constitute a propeptide that is removed on maturation; it reads SVFPQQTGQLAELQPQDRAGARAGWTPMLQ. 3 disulfides stabilise this stretch: Cys69/Cys72, Cys70/Cys78, and Cys73/Cys81.

Belongs to the hepcidin family. Interacts with SLC40A1; this interaction promotes SLC40A1 rapid ubiquitination.

The protein resides in the secreted. Functionally, liver-produced hormone that constitutes the main circulating regulator of iron absorption and distribution across tissues. Acts by promoting endocytosis and degradation of ferroportin/SLC40A1, leading to the retention of iron in iron-exporting cells and decreased flow of iron into plasma. Controls the major flows of iron into plasma: absorption of dietary iron in the intestine, recycling of iron by macrophages, which phagocytose old erythrocytes and other cells, and mobilization of stored iron from hepatocytes. In terms of biological role, has strong antimicrobial activity against E.coli ML35P N.cinerea and weaker against S.epidermidis, S.aureus and group b streptococcus bacteria. Active against the fungus C.albicans. No activity against P.aeruginosa. This is Hepcidin (HAMP) from Pongo abelii (Sumatran orangutan).